The primary structure comprises 183 residues: SAYSvFN domain-containing protein 1 (183 aa).

The Cytoplasmic segment spans residues 1–105 (MEQRLAEFRA…SFLTNITFLK (105 aa)). The interval 11–36 (ARKRAGLAAQPPAASQGAQTPGEKAE) is disordered. Low complexity predominate over residues 16-36 (GLAAQPPAASQGAQTPGEKAE). The middle helical (MH) stretch occupies residues 91–105 (SCWDQSFLTNITFLK). Positions 106-126 (VLLWLVLLGLFVELEFGLAYF) form an intramembrane region, helical. At 127–183 (VLSLFYWMYVGTRGPEEKKEGEKSAYSVFNPGCEAIQGTLTAEQLERELQLRPLAGR) the chain is on the cytoplasmic side.

The protein belongs to the SAYSD1 family. As to quaternary structure, associates (via N-terminus) with ribosomes.

Its subcellular location is the endoplasmic reticulum membrane. The protein resides in the cytoplasmic vesicle membrane. Functionally, ufmylation 'reader' component of a translocation-associated quality control pathway, a mechanism that takes place when a ribosome has stalled during translation, and which is required to degrade clogged substrates. Specifically recognizes and binds ufmylated ribosomes when a ribosome has stalled, promoting the transport of stalled nascent chain via the TRAPP complex to lysosomes for degradation. This is SAYSvFN domain-containing protein 1 from Homo sapiens (Human).